Here is a 458-residue protein sequence, read N- to C-terminus: uncharacterized protein (458 aa).

The next 12 helical transmembrane spans lie at 26 to 46 (LIAI…KSIH), 47 to 67 (FAGP…FLIM), 95 to 115 (AAFI…MADL), 125 to 145 (WLPG…LLIM), 160 to 180 (FALI…VMIF), 208 to 228 (GFIL…LVGL), 251 to 271 (VLLF…WDII), 278 to 298 (FVQV…NFVV), 342 to 362 (ALFF…IMPE), 365 to 385 (FTLI…ITVI), 409 to 429 (PFTN…LALA), and 432 to 452 (TRVS…IYKV).

It belongs to the amino acid-polyamine-organocation (APC) superfamily.

The protein localises to the cell membrane. Probable amino-acid or metabolite transport protein. This is an uncharacterized protein from Bacillus subtilis (strain 168).